The following is a 311-amino-acid chain: 4-hydroxy-tetrahydrodipicolinate synthase (311 aa).

Pyruvate is bound at residue Thr51. The Proton donor/acceptor role is filled by Tyr140. Lys168 functions as the Schiff-base intermediate with substrate in the catalytic mechanism. Ile209 provides a ligand contact to pyruvate.

It belongs to the DapA family. In terms of assembly, homotetramer; dimer of dimers.

Its subcellular location is the cytoplasm. It carries out the reaction L-aspartate 4-semialdehyde + pyruvate = (2S,4S)-4-hydroxy-2,3,4,5-tetrahydrodipicolinate + H2O + H(+). Its pathway is amino-acid biosynthesis; L-lysine biosynthesis via DAP pathway; (S)-tetrahydrodipicolinate from L-aspartate: step 3/4. Catalyzes the condensation of (S)-aspartate-beta-semialdehyde [(S)-ASA] and pyruvate to 4-hydroxy-tetrahydrodipicolinate (HTPA). The sequence is that of 4-hydroxy-tetrahydrodipicolinate synthase from Streptococcus pneumoniae (strain Taiwan19F-14).